The primary structure comprises 675 residues: Heat shock 70 kDa protein 12A (675 aa).

Positions 1–13 are enriched in basic and acidic residues; sequence MADKEAGGSDGPR. The interval 1–45 is disordered; sequence MADKEAGGSDGPRETAPTSAYSSPARSLGDTGITPLSPSHIVNDT. Ala2 carries the N-acetylalanine modification. Polar residues-rich tracts occupy residues 16–25 and 34–45; these read APTSAYSSPA and TPLSPSHIVNDT.

This sequence belongs to the heat shock protein 70 family. As to quaternary structure, interacts with SORL1 (via cytosolic C-terminus); this interaction affects SORL1 internalization and subcellular localization. In terms of tissue distribution, widely expressed with highest levels in brain, kidney and muscle.

Its subcellular location is the cytoplasm. The protein resides in the nucleus. In terms of biological role, adapter protein for SORL1, but not SORT1. Delays SORL1 internalization and affects SORL1 subcellular localization. This is Heat shock 70 kDa protein 12A (HSPA12A) from Homo sapiens (Human).